We begin with the raw amino-acid sequence, 350 residues long: Protein-glutamate methylesterase/protein-glutamine glutaminase (350 aa).

The region spanning 5-122 (KVLCVDDSAL…RDGLIEYSEV (118 aa)) is the Response regulatory domain. Position 56 is a 4-aspartylphosphate (Asp56). In terms of domain architecture, CheB-type methylesterase spans 152-346 (PFASSEKLVI…ERILTRLGDR (195 aa)). Catalysis depends on residues Ser165, His191, and Asp288.

Belongs to the CheB family. Post-translationally, phosphorylated by CheA. Phosphorylation of the N-terminal regulatory domain activates the methylesterase activity.

The protein resides in the cytoplasm. It catalyses the reaction [protein]-L-glutamate 5-O-methyl ester + H2O = L-glutamyl-[protein] + methanol + H(+). The enzyme catalyses L-glutaminyl-[protein] + H2O = L-glutamyl-[protein] + NH4(+). Involved in chemotaxis. Part of a chemotaxis signal transduction system that modulates chemotaxis in response to various stimuli. Catalyzes the demethylation of specific methylglutamate residues introduced into the chemoreceptors (methyl-accepting chemotaxis proteins or MCP) by CheR. Also mediates the irreversible deamidation of specific glutamine residues to glutamic acid. This Bordetella bronchiseptica (strain ATCC BAA-588 / NCTC 13252 / RB50) (Alcaligenes bronchisepticus) protein is Protein-glutamate methylesterase/protein-glutamine glutaminase.